Consider the following 206-residue polypeptide: Small ribosomal subunit protein uS4 (206 aa).

Residues 96–156 form the S4 RNA-binding domain; sequence GRLDNVVYRM…EKSKKQARIK (61 aa).

Belongs to the universal ribosomal protein uS4 family. Part of the 30S ribosomal subunit. Contacts protein S5. The interaction surface between S4 and S5 is involved in control of translational fidelity.

In terms of biological role, one of the primary rRNA binding proteins, it binds directly to 16S rRNA where it nucleates assembly of the body of the 30S subunit. With S5 and S12 plays an important role in translational accuracy. This chain is Small ribosomal subunit protein uS4, found in Actinobacillus succinogenes (strain ATCC 55618 / DSM 22257 / CCUG 43843 / 130Z).